Reading from the N-terminus, the 124-residue chain is V-type proton ATPase subunit F 1 (124 aa).

A Phosphoserine modification is found at serine 87.

This sequence belongs to the V-ATPase F subunit family. As to quaternary structure, V-ATPase is a heteromultimeric enzyme made up of two complexes: the ATP-hydrolytic V1 complex and the proton translocation V0 complex. The V1 complex consists of three catalytic AB heterodimers that form a heterohexamer, three peripheral stalks each consisting of EG heterodimers, one central rotor including subunits D and F, and the regulatory subunits C and H. The proton translocation complex V0 consists of the proton transport subunit a, a ring of proteolipid subunits c9c'', rotary subunit d, subunits e and f, and the accessory subunits VhaAC45 and ATP6AP2.

Its function is as follows. Subunit of the V1 complex of vacuolar(H+)-ATPase (V-ATPase), a multisubunit enzyme composed of a peripheral complex (V1) that hydrolyzes ATP and a membrane integral complex (V0) that translocates protons. V-ATPase is responsible for acidifying and maintaining the pH of intracellular compartments and in some cell types, is targeted to the plasma membrane, where it is responsible for acidifying the extracellular environment. The protein is V-type proton ATPase subunit F 1 (Vha14-1) of Drosophila melanogaster (Fruit fly).